A 412-amino-acid chain; its full sequence is Protein arginine N-methyltransferase 2 (412 aa).

The RMT2 domain maps to 190–412 (TAADPDTYLN…YYYHPKISFA (223 aa)). Residues Tyr-197, Met-227, 250-255 (FGMGII), 271-273 (EAH), 298-299 (WQ), and Asp-319 each bind S-adenosyl-L-methionine.

It belongs to the class I-like SAM-binding methyltransferase superfamily. RMT2 methyltransferase family. Monomer.

The protein localises to the cytoplasm. The protein resides in the nucleus. In terms of biological role, S-adenosyl-L-methionine-dependent protein-arginine N-methyltransferase that methylates the delta-nitrogen atom of arginine residues to form N5-methylarginine (type IV) in target proteins. Monomethylates ribosomal protein L12. This Candida glabrata (strain ATCC 2001 / BCRC 20586 / JCM 3761 / NBRC 0622 / NRRL Y-65 / CBS 138) (Yeast) protein is Protein arginine N-methyltransferase 2.